The chain runs to 289 residues: tRNA acetyltransferase TAN1 (289 aa).

The segment covering 1–10 (MGEKRNRNGK) has biased composition (basic and acidic residues). 2 disordered regions span residues 1 to 31 (MGEKRNRNGKDANSQNRKKFKVSSGFLDPGT) and 64 to 83 (DIKEGEDESENDEKKDLSIE). Ser-72 is subject to Phosphoserine. Residues 146 to 259 (ADPKNMVKRT…KSNIGMCVVD (114 aa)) form the THUMP domain.

Its subcellular location is the cytoplasm. The protein resides in the nucleus. Its function is as follows. Probable tRNA acetyltransferase required for the formation of the modified nucleoside N(4)-acetylcytidine in serine and leucine tRNAs. Binds RNA. The polypeptide is tRNA acetyltransferase TAN1 (TAN1) (Saccharomyces cerevisiae (strain ATCC 204508 / S288c) (Baker's yeast)).